Consider the following 451-residue polypeptide: Trigger factor (451 aa).

Residues Gly171–Lys256 enclose the PPIase FKBP-type domain.

Belongs to the FKBP-type PPIase family. Tig subfamily.

It is found in the cytoplasm. It catalyses the reaction [protein]-peptidylproline (omega=180) = [protein]-peptidylproline (omega=0). Functionally, involved in protein export. Acts as a chaperone by maintaining the newly synthesized protein in an open conformation. Functions as a peptidyl-prolyl cis-trans isomerase. The polypeptide is Trigger factor (Bradyrhizobium sp. (strain ORS 278)).